The chain runs to 762 residues: Polyribonucleotide nucleotidyltransferase (762 aa).

Mg(2+)-binding residues include Asp531 and Asp537. The 60-residue stretch at Pro597–Ile656 folds into the KH domain. In terms of domain architecture, S1 motif spans Gly668–Val737.

The protein belongs to the polyribonucleotide nucleotidyltransferase family. Mg(2+) serves as cofactor.

It localises to the cytoplasm. The catalysed reaction is RNA(n+1) + phosphate = RNA(n) + a ribonucleoside 5'-diphosphate. In terms of biological role, involved in mRNA degradation. Catalyzes the phosphorolysis of single-stranded polyribonucleotides processively in the 3'- to 5'-direction. The polypeptide is Polyribonucleotide nucleotidyltransferase (Mycobacterium marinum (strain ATCC BAA-535 / M)).